A 125-amino-acid chain; its full sequence is Ribonuclease P protein component (125 aa).

The protein belongs to the RnpA family. Consists of a catalytic RNA component (M1 or rnpB) and a protein subunit.

It carries out the reaction Endonucleolytic cleavage of RNA, removing 5'-extranucleotides from tRNA precursor.. RNaseP catalyzes the removal of the 5'-leader sequence from pre-tRNA to produce the mature 5'-terminus. It can also cleave other RNA substrates such as 4.5S RNA. The protein component plays an auxiliary but essential role in vivo by binding to the 5'-leader sequence and broadening the substrate specificity of the ribozyme. The sequence is that of Ribonuclease P protein component from Idiomarina loihiensis (strain ATCC BAA-735 / DSM 15497 / L2-TR).